The sequence spans 492 residues: Homoserine O-acetyltransferase (492 aa).

In terms of domain architecture, AB hydrolase-1 spans 47–352; it reads NAILVFHALS…KSIYGHDAFL (306 aa). Catalysis depends on Ser152, which acts as the Nucleophile. Position 221 (Arg221) interacts with substrate. Catalysis depends on residues Asp315 and His348. Asp349 contacts substrate. 2 CBS domains span residues 375–431 and 440–492; these read MTKN…ENSI and MTKN…TITI.

It belongs to the AB hydrolase superfamily. MetX family. As to quaternary structure, homodimer.

The protein localises to the cytoplasm. The enzyme catalyses L-homoserine + acetyl-CoA = O-acetyl-L-homoserine + CoA. It functions in the pathway amino-acid biosynthesis; L-methionine biosynthesis via de novo pathway; O-acetyl-L-homoserine from L-homoserine: step 1/1. Transfers an acetyl group from acetyl-CoA to L-homoserine, forming acetyl-L-homoserine. The sequence is that of Homoserine O-acetyltransferase from Methanococcus vannielii (strain ATCC 35089 / DSM 1224 / JCM 13029 / OCM 148 / SB).